We begin with the raw amino-acid sequence, 285 residues long: Inositol polyphosphate 1-phosphatase (285 aa).

Mg(2+) is bound by residues E68, D106, L108, and D109. D109, G110, T111, S173, G195, S197, and K200 together coordinate 1D-myo-inositol 1,4-bisphosphate. Mg(2+) is bound at residue D223.

The protein belongs to the inositol monophosphatase superfamily. In terms of assembly, monomer. Mg(2+) is required as a cofactor.

Its subcellular location is the cytoplasm. The catalysed reaction is 1D-myo-inositol 1,4-bisphosphate + H2O = 1D-myo-inositol 4-phosphate + phosphate. It catalyses the reaction adenosine 3',5'-bisphosphate + H2O = AMP + phosphate. With respect to regulation, partially inhibited by Li(2+). In terms of biological role, catalyzes the hydrolysis of the 1-position phosphate from inositol 1,4-bisphosphate. Is also able to convert 3'(2')-phosphoadenosine 5'-phosphate (PAP) to AMP but with less efficiency. The protein is Inositol polyphosphate 1-phosphatase of Entamoeba histolytica (strain ATCC 30459 / HM-1:IMSS / ABRM).